Reading from the N-terminus, the 235-residue chain is Urease accessory protein UreF (235 aa).

This sequence belongs to the UreF family. In terms of assembly, ureD, UreF and UreG form a complex that acts as a GTP-hydrolysis-dependent molecular chaperone, activating the urease apoprotein by helping to assemble the nickel containing metallocenter of UreC. The UreE protein probably delivers the nickel.

It localises to the cytoplasm. Required for maturation of urease via the functional incorporation of the urease nickel metallocenter. The chain is Urease accessory protein UreF from Haemophilus influenzae (strain ATCC 51907 / DSM 11121 / KW20 / Rd).